The chain runs to 796 residues: Choline transporter-like 2 (796 aa).

A glycan (N-linked (GlcNAc...) asparagine) is linked at Asn-20. Residues 35–55 (PCLLLFVLFLGGWAFIAQYAI) traverse the membrane as a helical segment. N-linked (GlcNAc...) asparagine glycans are attached at residues Asn-209 and Asn-284. 4 consecutive transmembrane segments (helical) span residues 304-324 (WSIV…YIAL), 332-352 (ILWF…YFSV), 386-406 (LYLS…VIVL), and 431-451 (VFFP…AIGV). N-linked (GlcNAc...) asparagine glycosylation is found at Asn-488 and Asn-520. A run of 5 helical transmembrane segments spans residues 542-562 (VFGF…VLAS), 585-605 (FFQT…ILAI), 626-648 (AVTR…FLKF), 691-711 (FLFF…TYYF), and 724-744 (IAVP…VFFG).

The protein belongs to the CTL (choline transporter-like) family.

The protein resides in the membrane. This is Choline transporter-like 2 from Drosophila melanogaster (Fruit fly).